The chain runs to 496 residues: Cytochrome P450 71D95 (496 aa).

A helical; Signal-anchor transmembrane segment spans residues Glu-2–Ile-22. Cys-436 lines the heme pocket.

Belongs to the cytochrome P450 family. Heme is required as a cofactor.

The protein localises to the endoplasmic reticulum membrane. The catalysed reaction is (4S)-limonene + reduced [NADPH--hemoprotein reductase] + O2 = (1S,6R)-isopiperitenol + oxidized [NADPH--hemoprotein reductase] + H2O + H(+). In terms of biological role, hydroxylates both (+)- and (-)-limonene to (+) and (-)-trans-isopiperitenol. The polypeptide is Cytochrome P450 71D95 (CYP71D95) (Mentha spicata (Spearmint)).